A 512-amino-acid polypeptide reads, in one-letter code: Cobyric acid synthase (512 aa).

The GATase cobBQ-type domain maps to Ala251–Phe451. Cys332 serves as the catalytic Nucleophile. Residue His443 is part of the active site.

Belongs to the CobB/CobQ family. CobQ subfamily.

It functions in the pathway cofactor biosynthesis; adenosylcobalamin biosynthesis. Functionally, catalyzes amidations at positions B, D, E, and G on adenosylcobyrinic A,C-diamide. NH(2) groups are provided by glutamine, and one molecule of ATP is hydrogenolyzed for each amidation. This is Cobyric acid synthase from Yersinia enterocolitica serotype O:8 / biotype 1B (strain NCTC 13174 / 8081).